The sequence spans 364 residues: MAQELMFEEPRRGKPPRHLADFDAEGRASAVAALGLPPFRAKQLAHQYYGRLIADPRQMTDLPAAVRDQIAETMFPNLLTAAREVTCDAGQTRKTLWRATDGVTVESVLMRYPQRNTVCISSQAGCGMACPFCATGQGGLTRNLSTAEIVEQVRAAAAALRDEFGDRLSNVVFMGLGEPLANYARVLAAVRRITEPPPTGFGISARSVTVSTVGLAPAIRKLADERLGVTLALSLHAPDDELRDTLVPVNNRWKISEALEAAHYYAEVTGRRVSVEYALIREVNDQPWRADLLGKRLHGALGPLVHVNLIPLNPTPGSDWDASPKPVEREFVKRVRAQGVSCTVRDTRGREISAACGQLAAEGG.

Catalysis depends on E106, which acts as the Proton acceptor. The region spanning 112-350 is the Radical SAM core domain; it reads YPQRNTVCIS…SCTVRDTRGR (239 aa). A disulfide bond links C119 and C356. C126, C130, and C133 together coordinate [4Fe-4S] cluster. S-adenosyl-L-methionine is bound by residues 177-178, S211, 234-236, and N313; these read GE and SLH. The active-site S-methylcysteine intermediate is the C356.

The protein belongs to the radical SAM superfamily. RlmN family. The cofactor is [4Fe-4S] cluster.

Its subcellular location is the cytoplasm. The enzyme catalyses adenosine(2503) in 23S rRNA + 2 reduced [2Fe-2S]-[ferredoxin] + 2 S-adenosyl-L-methionine = 2-methyladenosine(2503) in 23S rRNA + 5'-deoxyadenosine + L-methionine + 2 oxidized [2Fe-2S]-[ferredoxin] + S-adenosyl-L-homocysteine. It carries out the reaction adenosine(37) in tRNA + 2 reduced [2Fe-2S]-[ferredoxin] + 2 S-adenosyl-L-methionine = 2-methyladenosine(37) in tRNA + 5'-deoxyadenosine + L-methionine + 2 oxidized [2Fe-2S]-[ferredoxin] + S-adenosyl-L-homocysteine. Its function is as follows. Specifically methylates position 2 of adenine 2503 in 23S rRNA and position 2 of adenine 37 in tRNAs. This Mycobacterium ulcerans (strain Agy99) protein is Probable dual-specificity RNA methyltransferase RlmN.